A 235-amino-acid polypeptide reads, in one-letter code: Phosphoribosylaminoimidazole-succinocarboxamide synthase (235 aa).

Belongs to the SAICAR synthetase family.

The catalysed reaction is 5-amino-1-(5-phospho-D-ribosyl)imidazole-4-carboxylate + L-aspartate + ATP = (2S)-2-[5-amino-1-(5-phospho-beta-D-ribosyl)imidazole-4-carboxamido]succinate + ADP + phosphate + 2 H(+). The protein operates within purine metabolism; IMP biosynthesis via de novo pathway; 5-amino-1-(5-phospho-D-ribosyl)imidazole-4-carboxamide from 5-amino-1-(5-phospho-D-ribosyl)imidazole-4-carboxylate: step 1/2. The polypeptide is Phosphoribosylaminoimidazole-succinocarboxamide synthase (Streptococcus pneumoniae serotype 2 (strain D39 / NCTC 7466)).